A 203-amino-acid chain; its full sequence is Small ribosomal subunit protein uS3 (203 aa).

Belongs to the universal ribosomal protein uS3 family. As to quaternary structure, part of the 30S ribosomal subunit. Forms a tight complex with proteins S10 and S14.

Its function is as follows. Binds the lower part of the 30S subunit head. Binds mRNA in the 70S ribosome, positioning it for translation. The chain is Small ribosomal subunit protein uS3 from Carsonella ruddii (strain PV).